The chain runs to 452 residues: Phosphoglucosamine mutase (452 aa).

S104 (phosphoserine intermediate) is an active-site residue. The Mg(2+) site is built by S104, D244, D246, and D248. A Phosphoserine modification is found at S104.

It belongs to the phosphohexose mutase family. Mg(2+) serves as cofactor. Activated by phosphorylation.

The enzyme catalyses alpha-D-glucosamine 1-phosphate = D-glucosamine 6-phosphate. Functionally, catalyzes the conversion of glucosamine-6-phosphate to glucosamine-1-phosphate. This Pediococcus pentosaceus (strain ATCC 25745 / CCUG 21536 / LMG 10740 / 183-1w) protein is Phosphoglucosamine mutase.